A 246-amino-acid polypeptide reads, in one-letter code: Bis(5'-nucleosyl)-tetraphosphatase PrpE [asymmetrical] (246 aa).

It belongs to the PrpE family. The cofactor is Ni(2+).

It catalyses the reaction P(1),P(4)-bis(5'-guanosyl) tetraphosphate + H2O = GMP + GTP + 2 H(+). Asymmetrically hydrolyzes Ap4p to yield AMP and ATP. The chain is Bis(5'-nucleosyl)-tetraphosphatase PrpE [asymmetrical] from Bacillus thuringiensis (strain Al Hakam).